Reading from the N-terminus, the 252-residue chain is Phosphomannomutase (252 aa).

Residue Asp13 is the Nucleophile of the active site. The Mg(2+) site is built by Asp13 and Asp15. Catalysis depends on Asp15, which acts as the Proton donor/acceptor. Alpha-D-mannose 1-phosphate-binding residues include Arg22, Arg124, Arg135, Arg142, Ser180, and Asp182. Mg(2+) is bound by residues Asp208, Tyr220, and Thr225.

It belongs to the eukaryotic PMM family. Homodimer. It depends on Mg(2+) as a cofactor. Expressed in roots, leaves, stems and flowers.

The protein localises to the cytoplasm. It carries out the reaction alpha-D-mannose 1-phosphate = D-mannose 6-phosphate. Its pathway is nucleotide-sugar biosynthesis; GDP-alpha-D-mannose biosynthesis; alpha-D-mannose 1-phosphate from D-fructose 6-phosphate: step 2/2. Catalyzes the interconversion of mannose-6-phosphate to mannose-1-phosphate, the precursor for the synthesis of GDP-mannose. GDP-mannose is an essential sugar nucleotide for the synthesis of D-mannose-containing cell wall polysaccharides (galactomannans and glucomannans), glycolipids, glycoproteins and the antioxidant L-ascorbate. Involved in the biosynthesis of ascorbate and polysaccharides in response to abiotic stress during seed germination. This is Phosphomannomutase from Dendrobium officinale (Orchid).